Here is a 349-residue protein sequence, read N- to C-terminus: Protein-glutamate methylesterase/protein-glutamine glutaminase (349 aa).

In terms of domain architecture, Response regulatory spans 5–122; the sequence is RVLSVDDSAL…REGMLAYSEM (118 aa). Aspartate 56 carries the post-translational modification 4-aspartylphosphate. Residues 152–344 enclose the CheB-type methylesterase domain; that stretch reads LLSSEKLIAI…QQMLAKISAG (193 aa). Catalysis depends on residues serine 164, histidine 190, and aspartate 286.

Belongs to the CheB family. In terms of processing, phosphorylated by CheA. Phosphorylation of the N-terminal regulatory domain activates the methylesterase activity.

It is found in the cytoplasm. It catalyses the reaction [protein]-L-glutamate 5-O-methyl ester + H2O = L-glutamyl-[protein] + methanol + H(+). The catalysed reaction is L-glutaminyl-[protein] + H2O = L-glutamyl-[protein] + NH4(+). In terms of biological role, involved in chemotaxis. Part of a chemotaxis signal transduction system that modulates chemotaxis in response to various stimuli. Catalyzes the demethylation of specific methylglutamate residues introduced into the chemoreceptors (methyl-accepting chemotaxis proteins or MCP) by CheR. Also mediates the irreversible deamidation of specific glutamine residues to glutamic acid. The polypeptide is Protein-glutamate methylesterase/protein-glutamine glutaminase (Escherichia coli O6:H1 (strain CFT073 / ATCC 700928 / UPEC)).